Reading from the N-terminus, the 208-residue chain is MVQRSKSSANWLREHFNDPFVKQAQKDGYRSRASYKLLEIQEKDRLIRPGMSVIDLGAAPGGWSQVTSRLIGGQGRLIASDILEMDSIPDVTFIQGDFTQDEVLQQILDAVGDSHVDLVISDMAPNMSGTPEVDMPRAMFLCELALDLATRVLKPGGDFLIKIFQGEGFDMYLKDVRTKFDKVQMRKPSSSRDRSREQYLLGKGFKGA.

S-adenosyl-L-methionine contacts are provided by glycine 61, tryptophan 63, aspartate 81, aspartate 97, and aspartate 122. Lysine 162 (proton acceptor) is an active-site residue.

It belongs to the class I-like SAM-binding methyltransferase superfamily. RNA methyltransferase RlmE family.

Its subcellular location is the cytoplasm. It catalyses the reaction uridine(2552) in 23S rRNA + S-adenosyl-L-methionine = 2'-O-methyluridine(2552) in 23S rRNA + S-adenosyl-L-homocysteine + H(+). Functionally, specifically methylates the uridine in position 2552 of 23S rRNA at the 2'-O position of the ribose in the fully assembled 50S ribosomal subunit. The polypeptide is Ribosomal RNA large subunit methyltransferase E (Pseudomonas putida (strain W619)).